Consider the following 110-residue polypeptide: UPF0213 protein DVU_3309 (110 aa).

Positions 8–83 (EVWFVYLLRC…KRQPTDQKLA (76 aa)) constitute a GIY-YIG domain.

It belongs to the UPF0213 family.

The polypeptide is UPF0213 protein DVU_3309 (Nitratidesulfovibrio vulgaris (strain ATCC 29579 / DSM 644 / CCUG 34227 / NCIMB 8303 / VKM B-1760 / Hildenborough) (Desulfovibrio vulgaris)).